The chain runs to 1052 residues: Membrane-bound transcription factor site-1 protease (1052 aa).

Positions 1–17 (MKLVNIWLLLLVVLLCG) are cleaved as a signal peptide. Residues 18–186 (KKHLGDRLGK…TGRHSSRRLL (169 aa)) constitute a propeptide that is removed on maturation. The N-linked (GlcNAc...) asparagine glycan is linked to Asn-148. Ser-168 carries the post-translational modification Phosphoserine. Over 187-999 (RAIPRQVAQT…MPGRYNQEVG (813 aa)) the chain is Lumenal. Residues 190–472 (PRQVAQTLQA…HGKLDLLRAY (283 aa)) form the Peptidase S8 domain. The active-site Charge relay system is the Asp-218. Asn-236 carries an N-linked (GlcNAc...) asparagine glycan. His-249 (charge relay system) is an active-site residue. N-linked (GlcNAc...) asparagine glycosylation is present at Asn-305. Ser-414 functions as the Charge relay system in the catalytic mechanism. 2 N-linked (GlcNAc...) asparagine glycosylation sites follow: Asn-515 and Asn-728. The segment covering 877–887 (PSLSHSGNRQR) has biased composition (polar residues). The interval 877-900 (PSLSHSGNRQRPPSGAGLAPPERM) is disordered. An N-linked (GlcNAc...) asparagine glycan is attached at Asn-939. Residues 1000–1022 (QTIPVFAFLGAMVALAFFVVQIS) form a helical membrane-spanning segment. The Cytoplasmic portion of the chain corresponds to 1023-1052 (KAKSRPKRRRPRAKRPQLAQQAHPARTPSV). The span at 1026–1037 (SRPKRRRPRAKR) shows a compositional bias: basic residues. The disordered stretch occupies residues 1026 to 1052 (SRPKRRRPRAKRPQLAQQAHPARTPSV).

It belongs to the peptidase S8 family. Interacts with LYSET; this interaction bridges GNPTAB to MBTPS1. Requires Ca(2+) as cofactor. The 148 kDa zymogen is processed progressively into two membrane-bound 120 and 106 kDa forms in the endoplasmic reticulum, and late into a secreted 98 kDa form. The propeptide is autocatalytically removed through an intramolecular cleavage after Leu-186. Further cleavage generates 14, 10, and 8 kDa intermediates. As to expression, widely expressed. In adult rat, highly expressed in anterior pituitary, thyroid and adrenal glands and in liver. In 2-day old rat, detected in developing skin, striated muscles, cardiac muscles, bones, teeth and internal organs. Highly expressed in retina, cerebellum, pituitary, submaxillary, thyroid and adrenal glands, molars, thymus, kidney and intestine.

The protein localises to the endoplasmic reticulum membrane. It localises to the golgi apparatus membrane. The enzyme catalyses Processes precursors containing basic and hydrophobic/aliphatic residues at P4 and P2, respectively, with a relatively relaxed acceptance of amino acids at P1 and P3.. Inhibited by divalent copper and zinc ions, but not by nickel or cobalt. Inhibited by its prosegment, but not smaller fragments. Inhibited by 4-(2-aminoethyl)benzenesulfonyl fluoride (AEBSF), a serine protease inhibitor. Functionally, serine protease that cleaves after hydrophobic or small residues, provided that Arg or Lys is in position P4: known substrates include SREBF1/SREBP1, SREBF2/SREBP2, BDNF, GNPTAB, ATF6, ATF6B and FAM20C. Cleaves substrates after Arg-Ser-Val-Leu (SREBP2), Arg-His-Leu-Leu (ATF6), Arg-Gly-Leu-Thr (BDNF) and its own propeptide after Arg-Arg-Leu-Leu. Catalyzes the first step in the proteolytic activation of the sterol regulatory element-binding proteins (SREBPs) SREBF1/SREBP1 and SREBF2/SREBP2. Also mediates the first step in the proteolytic activation of the cyclic AMP-dependent transcription factor ATF-6 (ATF6 and ATF6B). Mediates the protein cleavage of GNPTAB into subunit alpha and beta, thereby participating in biogenesis of lysosomes. Cleaves the propeptide from FAM20C which is required for FAM20C secretion from the Golgi apparatus membrane and for enhancement of FAM20C kinase activity, promoting osteoblast differentiation and biomineralization. Involved in the regulation of M6P-dependent Golgi-to-lysosome trafficking of lysosomal enzymes. It is required for the activation of CREB3L2/BBF2H7, a transcriptional activator of MIA3/TANGO and other genes controlling mega vesicle formation. Therefore, it plays a key role in the regulation of mega vesicle-mediated collagen trafficking. In astrocytes and osteoblasts, upon DNA damage and ER stress, mediates the first step of the regulated intramembrane proteolytic activation of the transcription factor CREB3L1, leading to the inhibition of cell-cycle progression. The protein is Membrane-bound transcription factor site-1 protease (Mbtps1) of Rattus norvegicus (Rat).